A 951-amino-acid polypeptide reads, in one-letter code: Replication protein A 70 kDa DNA-binding subunit C (951 aa).

A disordered region spans residues 139-172 (AQTNNGTYSGGASMLGPSVAPRAEQAASNSSYGG). The OB DNA-binding region spans 320–403 (WTIKARVTAK…NTLNHDYEIT (84 aa)). A C4-type zinc finger spans residues 612 to 639 (CPKLLPVGRQCNKKAINNGDGMWHCDRC).

It belongs to the replication factor A protein 1 family. In terms of assembly, heterotrimer of RPA1, RPA2 and RPA3 (canonical replication protein A complex). Interacts with RPA2C.

It is found in the nucleus. In terms of biological role, component of the replication protein A complex (RPA) required for DNA recombination, repair and replication. The activity of RPA is mediated by single-stranded DNA binding and protein interactions. Probably involved in repair of double-strand DNA breaks (DSBs) induced by genotoxic stresses. In Oryza sativa subsp. japonica (Rice), this protein is Replication protein A 70 kDa DNA-binding subunit C (RPA1C).